A 583-amino-acid chain; its full sequence is Isocitrate dehydrogenase kinase/phosphatase (583 aa).

Residues alanine 315 to methionine 321 and lysine 336 contribute to the ATP site. Residue aspartate 371 is part of the active site.

It belongs to the AceK family.

Its subcellular location is the cytoplasm. The catalysed reaction is L-seryl-[isocitrate dehydrogenase] + ATP = O-phospho-L-seryl-[isocitrate dehydrogenase] + ADP + H(+). Its function is as follows. Bifunctional enzyme which can phosphorylate or dephosphorylate isocitrate dehydrogenase (IDH) on a specific serine residue. This is a regulatory mechanism which enables bacteria to bypass the Krebs cycle via the glyoxylate shunt in response to the source of carbon. When bacteria are grown on glucose, IDH is fully active and unphosphorylated, but when grown on acetate or ethanol, the activity of IDH declines drastically concomitant with its phosphorylation. The protein is Isocitrate dehydrogenase kinase/phosphatase of Salmonella gallinarum (strain 287/91 / NCTC 13346).